The sequence spans 405 residues: MKEILTVTELNSYIANLLDSDPFLGQLWLRGEISGFRLYQQSGHMYFTLKDEDSTISAVMFKSRARGLKFKPKDGMEVLLRASVSVFARQGKYQLYVEEMQPYGIGGLFLYLEELKKKLAAKGYFAPERKKAIPAFVQRVGIVTSQDGAALRDICRILKQRHPGVEVVLAHSSVQGSEAPGELAEGLRLLNSYAEVELIIIGRGGGSYEDLMAFNSELVVQAIYESNIPVISAVGHEVDFTLADLVADLRAATPSQAASLAVADMQALSRQLDNYQQRLLRAMQRKLLYYTEIIDRLMMKRIWKQPRSLLHMREELLSQLEKSLSRGMAEIFREKKMKLSMNMAALDSLSPLKIMERGYVLLQKEGRIIRDEQQVQIGDRLEVAMRHADLEIEVIKKERVKRWKS.

This sequence belongs to the XseA family. As to quaternary structure, heterooligomer composed of large and small subunits.

It localises to the cytoplasm. It carries out the reaction Exonucleolytic cleavage in either 5'- to 3'- or 3'- to 5'-direction to yield nucleoside 5'-phosphates.. In terms of biological role, bidirectionally degrades single-stranded DNA into large acid-insoluble oligonucleotides, which are then degraded further into small acid-soluble oligonucleotides. This is Exodeoxyribonuclease 7 large subunit from Syntrophomonas wolfei subsp. wolfei (strain DSM 2245B / Goettingen).